Here is a 1096-residue protein sequence, read N- to C-terminus: Serine-repeat antigen protein 3 (1096 aa).

Positions 1–21 are cleaved as a signal peptide; sequence MARLSSIVFIICLLLCNNAIS. The interval 28 to 205 is disordered; sequence PSSGGTLSGG…RSPPPQVNNI (178 aa). A compositionally biased stretch (low complexity) spans 77 to 97; sequence NSDSTGDSSLGSTGSNGSQPA. N-linked (GlcNAc...) asparagine glycosylation is present at Asn-92. The span at 102-113 shows a compositional bias: basic and acidic residues; that stretch reads KEPEPTTPKEPE. Residues 123-147 are compositionally biased toward polar residues; the sequence is VTPQKTAETASGKQVSPTPSENPPS. The span at 149–161 shows a compositional bias: basic and acidic residues; it reads DTPKPESSSEKKV. 8 N-linked (GlcNAc...) asparagine glycosylation sites follow: Asn-204, Asn-607, Asn-637, Asn-662, Asn-671, Asn-712, Asn-892, and Asn-951. Disordered regions lie at residues 916 to 952 and 964 to 1006; these read EAKN…QANS and NQRT…ASAN. 2 stretches are compositionally biased toward polar residues: residues 925–952 and 964–975; these read QNYG…QANS and NQRTADSNPNAQ. Positions 976–1006 are enriched in low complexity; that stretch reads STPSPNTTVTDTVNSNTANSNTANSNTASAN. Asn-981 and Asn-1039 each carry an N-linked (GlcNAc...) asparagine glycan.

It belongs to the peptidase C1 family. In terms of processing, proteolytically cleaved in both blood and liver stage parasites. Precursor of 130 kDa is processed into 72 kDa and 55 kDa forms. Proteolytically cleaved by SUB1.

Its subcellular location is the cell membrane. The protein localises to the parasitophorous vacuole. It is found in the secreted. It localises to the host cytoplasm. In terms of biological role, putative cysteine protease. Probably involved in merozoite release from the parasitophorous vacuole during liver stages. In Plasmodium berghei (strain Anka), this protein is Serine-repeat antigen protein 3.